The primary structure comprises 758 residues: Glucan endo-1,3-beta-D-glucosidase (758 aa).

Positions 1–34 form a signal peptide, tat-type signal; the sequence is MSHASRRRWRRATTSAATAALLCGALLTFPSAPA. Residues 38 to 251 form a beta-sandwich subdomain region; sequence VRLGSGSYTT…SGYASVALLP (214 aa). In terms of domain architecture, GH81 spans 38 to 704; sequence VRLGSGSYTT…QWLSTLAEFG (667 aa). The tract at residues 252–342 is alpha/beta subdomain; that stretch reads SPDDFDRYAP…EGDRFTTELT (91 aa). The interval 352–704 is (alpha/beta)6 barrel subdomain; it reads TVDSADHQRL…QWLSTLAEFG (353 aa). 7 residues coordinate (1,3-beta-D-glucosyl)n: tyrosine 382, lysine 386, aspartate 457, histidine 461, asparagine 532, glutamate 534, and glutamate 538. Residue aspartate 457 is part of the active site. Residues glutamate 534 and glutamate 538 contribute to the active site.

Belongs to the glycosyl hydrolase 81 family. In terms of processing, predicted to be exported by the Tat system. The position of the signal peptide cleavage has not been experimentally proven.

It is found in the secreted. It carries out the reaction Hydrolysis of (1-&gt;3)-beta-D-glucosidic linkages in (1-&gt;3)-beta-D-glucans.. Functionally, cleaves internal linkages in 1,3-beta-glucan. May contribute to biomass degradation by hydrolyzing the 1,3-beta-linked plant polymer callose that is present in decomposing plant tissue. The polypeptide is Glucan endo-1,3-beta-D-glucosidase (Thermobifida fusca (strain YX)).